Here is a 478-residue protein sequence, read N- to C-terminus: Catalase (478 aa).

The segment at 1–23 is disordered; sequence MTNQLTTNEGQPWADNQHSQTAG. Active-site residues include H53 and N126. Y336 is a heme binding site.

This sequence belongs to the catalase family. Heme serves as cofactor.

Its subcellular location is the cytoplasm. It carries out the reaction 2 H2O2 = O2 + 2 H2O. Its function is as follows. Decomposes hydrogen peroxide into water and oxygen; serves to protect cells from the toxic effects of hydrogen peroxide. The chain is Catalase (katA) from Latilactobacillus sakei (Lactobacillus sakei).